Reading from the N-terminus, the 343-residue chain is Protein RecA (343 aa).

Residue 68 to 75 coordinates ATP; that stretch reads GPESGGKT.

The protein belongs to the RecA family.

Its subcellular location is the cytoplasm. Its function is as follows. Can catalyze the hydrolysis of ATP in the presence of single-stranded DNA, the ATP-dependent uptake of single-stranded DNA by duplex DNA, and the ATP-dependent hybridization of homologous single-stranded DNAs. It interacts with LexA causing its activation and leading to its autocatalytic cleavage. The protein is Protein RecA of Syntrophus aciditrophicus (strain SB).